The following is a 433-amino-acid chain: Gamma-glutamyl phosphate reductase 1 (433 aa).

This sequence belongs to the gamma-glutamyl phosphate reductase family.

It localises to the cytoplasm. The enzyme catalyses L-glutamate 5-semialdehyde + phosphate + NADP(+) = L-glutamyl 5-phosphate + NADPH + H(+). The protein operates within amino-acid biosynthesis; L-proline biosynthesis; L-glutamate 5-semialdehyde from L-glutamate: step 2/2. Its function is as follows. Catalyzes the NADPH-dependent reduction of L-glutamate 5-phosphate into L-glutamate 5-semialdehyde and phosphate. The product spontaneously undergoes cyclization to form 1-pyrroline-5-carboxylate. This chain is Gamma-glutamyl phosphate reductase 1, found in Synechocystis sp. (strain ATCC 27184 / PCC 6803 / Kazusa).